The primary structure comprises 338 residues: Anthocyanidin reductase ((2S)-flavan-3-ol-forming) (338 aa).

NADP(+) is bound by residues 18–21 (TGFV), Lys-48, 87–90 (VATP), and Tyr-168.

It belongs to the NAD(P)-dependent epimerase/dehydratase family. Dihydroflavonol-4-reductase subfamily. In terms of tissue distribution, expressed in seeds, grape skins, flowers and leaves.

The enzyme catalyses a (2S,3R)-flavan-3-ol + 2 NADP(+) = an anthocyanidin with a 3-hydroxy group + 2 NADPH + 2 H(+). It carries out the reaction a (2S,3S)-flavan-3-ol + 2 NADP(+) = an anthocyanidin with a 3-hydroxy group + 2 NADPH + 2 H(+). The protein operates within secondary metabolite biosynthesis; flavonoid biosynthesis. Its activity is regulated as follows. Inhibited at NaCl concentrations higher than 200 mM. In terms of biological role, produces the terminal flavan-3-ol monomers required for the formation of proanthocyanidins or condensed tannins in leaves and flowers, as well as in the skin and seeds of developing berries. Behaves as a reductase and as a C-3 epimerase. Catalyzes the double reduction of anthocyanidins, producing a mixture of (2S,3S)- and (2S,3R)-flavan-3-ols. The enzyme catalyzes sequential hydride transfers to C-2 and C-4, respectively and epimerization at C-3 is achieved by tautomerization that occurs between the two hydride transfers. Converts cyanidin, pelargonidin and delphinidin into catechin and epicatechin, afzelechin and epiafzelechin, and gallocatechin and epigallocatechin respectively. The chain is Anthocyanidin reductase ((2S)-flavan-3-ol-forming) from Vitis vinifera (Grape).